The primary structure comprises 409 residues: Argininosuccinate synthase (409 aa).

Residues 11-19 (AYSGGLDTS) and Ala38 contribute to the ATP site. 2 residues coordinate L-citrulline: Tyr91 and Ser96. Gly121 lines the ATP pocket. Residues Thr123, Asn127, and Asp128 each coordinate L-aspartate. Asn127 is a binding site for L-citrulline. Residues Arg131, Ser182, Ser191, Glu267, and Tyr279 each coordinate L-citrulline.

It belongs to the argininosuccinate synthase family. Type 1 subfamily. As to quaternary structure, homotetramer.

The protein resides in the cytoplasm. The enzyme catalyses L-citrulline + L-aspartate + ATP = 2-(N(omega)-L-arginino)succinate + AMP + diphosphate + H(+). It participates in amino-acid biosynthesis; L-arginine biosynthesis; L-arginine from L-ornithine and carbamoyl phosphate: step 2/3. The polypeptide is Argininosuccinate synthase (Xanthobacter autotrophicus (strain ATCC BAA-1158 / Py2)).